The following is a 510-amino-acid chain: Histidine ammonia-lyase (510 aa).

The 5-imidazolinone (Ala-Gly) cross-link spans 143 to 145; the sequence is ASG. S144 is subject to 2,3-didehydroalanine (Ser).

It belongs to the PAL/histidase family. Post-translationally, contains an active site 4-methylidene-imidazol-5-one (MIO), which is formed autocatalytically by cyclization and dehydration of residues Ala-Ser-Gly.

It is found in the cytoplasm. It catalyses the reaction L-histidine = trans-urocanate + NH4(+). The protein operates within amino-acid degradation; L-histidine degradation into L-glutamate; N-formimidoyl-L-glutamate from L-histidine: step 1/3. This chain is Histidine ammonia-lyase, found in Yersinia pestis.